Consider the following 493-residue polypeptide: 3-octaprenyl-4-hydroxybenzoate carboxy-lyase (493 aa).

Residue N172 coordinates Mn(2+). Residues I175–R177, R189–L191, and R194–G195 each bind prenylated FMN. Residue E238 coordinates Mn(2+). The Proton donor role is filled by D287.

This sequence belongs to the UbiD family. As to quaternary structure, homohexamer. Requires prenylated FMN as cofactor. It depends on Mn(2+) as a cofactor.

Its subcellular location is the cell membrane. The catalysed reaction is a 4-hydroxy-3-(all-trans-polyprenyl)benzoate + H(+) = a 2-(all-trans-polyprenyl)phenol + CO2. It participates in cofactor biosynthesis; ubiquinone biosynthesis. Functionally, catalyzes the decarboxylation of 3-octaprenyl-4-hydroxy benzoate to 2-octaprenylphenol, an intermediate step in ubiquinone biosynthesis. The chain is 3-octaprenyl-4-hydroxybenzoate carboxy-lyase from Cellvibrio japonicus (strain Ueda107) (Pseudomonas fluorescens subsp. cellulosa).